Here is a 42-residue protein sequence, read N- to C-terminus: Snaclec lebecetin subunit alpha (42 aa).

Residues 1–42 (DQDCLPGWSSHEGHCYKVFNLDKTWEDAEKFCTEQPSNGHLV) form the C-type lectin domain. Cys4 and Cys15 are disulfide-bonded.

As to quaternary structure, heterodimer of subunits alpha and beta; disulfide-linked. Ca(2+) serves as cofactor. Post-translationally, glycosylated. In terms of tissue distribution, expressed by the venom gland.

It localises to the secreted. In terms of biological role, binds to the platelet GPIb/IX/V receptor system and inhibits ristocetin-induced platelet aggregation in human platelet-rich plasma. Strongly inhibits platelet aggregation induced by ADP, calcium ionophore, thrombin and collagen. Does not inhibit U46619-induced platelet aggregation. This chain is Snaclec lebecetin subunit alpha, found in Macrovipera lebetinus (Levantine viper).